The primary structure comprises 465 residues: Amino-acid carrier protein AlsT (465 aa).

The next 10 helical transmembrane spans lie at 20 to 40 (LFYI…FIQF), 82 to 102 (VALA…VVAA), 142 to 162 (WLGI…FNAV), 177 to 197 (VNKI…IFGG), 208 to 228 (IVPV…ITNI), 241 to 261 (NALG…VIGA), 296 to 316 (LGVF…ILLY), 336 to 356 (IGGW…FSSV), 382 to 402 (IAVI…VWDM), and 405 to 425 (LFMG…SNVA).

This sequence belongs to the alanine or glycine:cation symporter (AGCS) (TC 2.A.25) family.

The protein resides in the cell membrane. The sequence is that of Amino-acid carrier protein AlsT (alsT) from Bacillus subtilis (strain 168).